Here is a 429-residue protein sequence, read N- to C-terminus: Small ribosomal subunit protein uS5m (429 aa).

The tract at residues 108 to 127 (AGAKKGRGKRTKKKKRKDLN) is disordered. Residues 111 to 125 (KKGRGKRTKKKKRKD) are compositionally biased toward basic residues. Positions 218–282 (FDTRILEVRN…NRAVHHLYYI (65 aa)) constitute an S5 DRBM domain.

This sequence belongs to the universal ribosomal protein uS5 family. Component of the mitochondrial ribosome small subunit (28S) which comprises a 12S rRNA and about 30 distinct proteins.

It localises to the mitochondrion. This chain is Small ribosomal subunit protein uS5m (MRPS5), found in Pongo abelii (Sumatran orangutan).